The primary structure comprises 191 residues: Cell division protein SepF (191 aa).

Positions 156–167 are enriched in polar residues; the sequence is EEASPSNMSNKG. The segment at 156 to 191 is disordered; that stretch reads EEASPSNMSNKGNDLISKETSPAPEPAWGETVATAL.

Belongs to the SepF family. Homodimer. Interacts with FtsZ.

It localises to the cytoplasm. In terms of biological role, cell division protein that is part of the divisome complex and is recruited early to the Z-ring. Probably stimulates Z-ring formation, perhaps through the cross-linking of FtsZ protofilaments. Its function overlaps with FtsA. The protein is Cell division protein SepF of Prochlorococcus marinus (strain NATL2A).